Consider the following 113-residue polypeptide: Protein FAM27E3 (113 aa).

Residues 1-113 (MGIFQLLRDR…YTHRHTHRVL (113 aa)) are disordered. A compositionally biased stretch (basic and acidic residues) spans 77–99 (QTDRERERNTQRLRDRERRENGR). Positions 100-113 (HTHTYTHRHTHRVL) are enriched in basic residues.

This sequence belongs to the FAM27 family.

In Homo sapiens (Human), this protein is Protein FAM27E3 (FAM27E3).